Consider the following 130-residue polypeptide: Phosphoribosyl-AMP cyclohydrolase (130 aa).

Aspartate 77 is a binding site for Mg(2+). Zn(2+) is bound at residue cysteine 78. Residues aspartate 79 and aspartate 81 each coordinate Mg(2+). The Zn(2+) site is built by cysteine 95 and cysteine 102.

This sequence belongs to the PRA-CH family. As to quaternary structure, homodimer. Requires Mg(2+) as cofactor. The cofactor is Zn(2+).

The protein resides in the cytoplasm. The enzyme catalyses 1-(5-phospho-beta-D-ribosyl)-5'-AMP + H2O = 1-(5-phospho-beta-D-ribosyl)-5-[(5-phospho-beta-D-ribosylamino)methylideneamino]imidazole-4-carboxamide. It functions in the pathway amino-acid biosynthesis; L-histidine biosynthesis; L-histidine from 5-phospho-alpha-D-ribose 1-diphosphate: step 3/9. In terms of biological role, catalyzes the hydrolysis of the adenine ring of phosphoribosyl-AMP. The sequence is that of Phosphoribosyl-AMP cyclohydrolase from Pseudomonas syringae pv. tomato (strain ATCC BAA-871 / DC3000).